Here is an 898-residue protein sequence, read N- to C-terminus: Endoplasmic reticulum metallopeptidase 1 (898 aa).

Residue Met-1 is modified to N-acetylmethionine. The interval 1 to 59 is disordered; the sequence is MEWSSESAAVRRHRGTAERREGQAAASHPQREASAQEDARGGGRMRGRTESGGESRGAK. Topologically, residues 1 to 66 are cytoplasmic; the sequence is MEWSSESAAV…GAKTALSEAR (66 aa). The span at 37–57 shows a compositional bias: basic and acidic residues; sequence EDARGGGRMRGRTESGGESRG. A helical transmembrane segment spans residues 67–87; the sequence is TALALALYLLALRALVQLSLQ. At 88-393 the chain is on the lumenal side; sequence RLVLSRTSGL…SSSEYRHGSM (306 aa). N-linked (GlcNAc...) asparagine glycosylation is present at Asn-176. Cys-198 and Cys-216 are oxidised to a cystine. Positions 199 and 211 each coordinate Zn(2+). The active-site Proton acceptor is the Glu-245. Positions 246, 272, and 348 each coordinate Zn(2+). Residues 394 to 414 form a helical membrane-spanning segment; sequence VFFDVLGLLVIAYPSRVGSII. Residues 415–451 lie on the Cytoplasmic side of the membrane; the sequence is NYMVVMAVVLYLGRKLLRPNHSNSNYVRDFLCGLGIT. A helical transmembrane segment spans residues 452–472; sequence FISWFTSLVTVLIIAVFVSLI. Topologically, residues 473–480 are lumenal; the sequence is GQSLSWYN. The helical transmembrane segment at 481-501 threads the bilayer; it reads YFYIAVCLYGTATVAKIILIH. The Cytoplasmic portion of the chain corresponds to 502–515; that stretch reads TLAKRFYYVNASDL. A helical membrane pass occupies residues 516-538; it reads YLGELFFDTSLFVHCGFLVALTA. Over 539 to 542 the chain is Lumenal; that stretch reads QGFC. The helical transmembrane segment at 543–562 threads the bilayer; sequence SAFMSAVWVAFPLLTKLCVY. Over 563-573 the chain is Cytoplasmic; sequence KDFKKHGAKGR. Residues 574–594 traverse the membrane as a helical segment; that stretch reads FIALYLLGMFIPYLYGLYLIW. Residues 595–615 are Lumenal-facing; the sequence is AVFEMFTPILGRSGSEIPPDV. A helical membrane pass occupies residues 616–636; sequence VLASILAVCVMILSSYFITFI. The Cytoplasmic portion of the chain corresponds to 637–645; that stretch reads YLVNSTKKT. The helical transmembrane segment at 646–666 threads the bilayer; the sequence is ILTLILVCAVTFLLVCSGAFF. At 667–898 the chain is on the lumenal side; sequence PYSSNPDSPK…WVSTYSLFVF (232 aa). A glycan (N-linked (GlcNAc...) asparagine) is linked at Asn-724.

It belongs to the peptidase M28 family. Requires Zn(2+) as cofactor. As to expression, widely expressed, with highest levels in ovary, kidney, hypothalamus and hippocampus. Within the ovarian follicle, expressed in granulosa cells, but not in oocytes. Present in both preantral and antral follicles, but not in atretic antral follicle.

The protein localises to the endoplasmic reticulum membrane. Functionally, within the ovary, required for the organization of somatic cells and oocytes into discrete follicular structures. The sequence is that of Endoplasmic reticulum metallopeptidase 1 from Rattus norvegicus (Rat).